The primary structure comprises 71 residues: ATP synthase subunit c (71 aa).

The next 2 membrane-spanning stretches (helical) occupy residues 9–29 (MIGY…IFAA) and 49–69 (LLGF…AFVI).

It belongs to the ATPase C chain family. F-type ATPases have 2 components, F(1) - the catalytic core - and F(0) - the membrane proton channel. F(1) has five subunits: alpha(3), beta(3), gamma(1), delta(1), epsilon(1). F(0) has three main subunits: a(1), b(2) and c(10-14). The alpha and beta chains form an alternating ring which encloses part of the gamma chain. F(1) is attached to F(0) by a central stalk formed by the gamma and epsilon chains, while a peripheral stalk is formed by the delta and b chains.

It is found in the cell membrane. In terms of biological role, f(1)F(0) ATP synthase produces ATP from ADP in the presence of a proton or sodium gradient. F-type ATPases consist of two structural domains, F(1) containing the extramembraneous catalytic core and F(0) containing the membrane proton channel, linked together by a central stalk and a peripheral stalk. During catalysis, ATP synthesis in the catalytic domain of F(1) is coupled via a rotary mechanism of the central stalk subunits to proton translocation. Key component of the F(0) channel; it plays a direct role in translocation across the membrane. A homomeric c-ring of between 10-14 subunits forms the central stalk rotor element with the F(1) delta and epsilon subunits. The protein is ATP synthase subunit c of Micrococcus luteus (strain ATCC 4698 / DSM 20030 / JCM 1464 / CCM 169 / CCUG 5858 / IAM 1056 / NBRC 3333 / NCIMB 9278 / NCTC 2665 / VKM Ac-2230) (Micrococcus lysodeikticus).